The chain runs to 216 residues: Adenylate kinase (216 aa).

G10 to T15 is a binding site for ATP. The NMP stretch occupies residues S30–V59. AMP contacts are provided by residues T31, R36, A57–V59, G85–R88, and Q92. The segment at G126–D163 is LID. R127 serves as a coordination point for ATP. The Zn(2+) site is built by C130, C133, C150, and C153. AMP is bound by residues R160 and R171. Residue K199 coordinates ATP.

It belongs to the adenylate kinase family. In terms of assembly, monomer.

The protein resides in the cytoplasm. The catalysed reaction is AMP + ATP = 2 ADP. Its pathway is purine metabolism; AMP biosynthesis via salvage pathway; AMP from ADP: step 1/1. Functionally, catalyzes the reversible transfer of the terminal phosphate group between ATP and AMP. Plays an important role in cellular energy homeostasis and in adenine nucleotide metabolism. The sequence is that of Adenylate kinase from Syntrophotalea carbinolica (strain DSM 2380 / NBRC 103641 / GraBd1) (Pelobacter carbinolicus).